Reading from the N-terminus, the 163-residue chain is Crossover junction endodeoxyribonuclease RuvC (163 aa).

Residues D7, E66, and D139 contribute to the active site. D7, E66, and D139 together coordinate Mg(2+).

Belongs to the RuvC family. As to quaternary structure, homodimer which binds Holliday junction (HJ) DNA. The HJ becomes 2-fold symmetrical on binding to RuvC with unstacked arms; it has a different conformation from HJ DNA in complex with RuvA. In the full resolvosome a probable DNA-RuvA(4)-RuvB(12)-RuvC(2) complex forms which resolves the HJ. Mg(2+) is required as a cofactor.

Its subcellular location is the cytoplasm. The enzyme catalyses Endonucleolytic cleavage at a junction such as a reciprocal single-stranded crossover between two homologous DNA duplexes (Holliday junction).. Its function is as follows. The RuvA-RuvB-RuvC complex processes Holliday junction (HJ) DNA during genetic recombination and DNA repair. Endonuclease that resolves HJ intermediates. Cleaves cruciform DNA by making single-stranded nicks across the HJ at symmetrical positions within the homologous arms, yielding a 5'-phosphate and a 3'-hydroxyl group; requires a central core of homology in the junction. The consensus cleavage sequence is 5'-(A/T)TT(C/G)-3'. Cleavage occurs on the 3'-side of the TT dinucleotide at the point of strand exchange. HJ branch migration catalyzed by RuvA-RuvB allows RuvC to scan DNA until it finds its consensus sequence, where it cleaves and resolves the cruciform DNA. In Thermomicrobium roseum (strain ATCC 27502 / DSM 5159 / P-2), this protein is Crossover junction endodeoxyribonuclease RuvC.